Here is a 390-residue protein sequence, read N- to C-terminus: 5-hydroxytryptamine receptor 1B (390 aa).

At 1 to 46 (MEEPGAQCAPPPPAGSETWVPQANLSSAPSQNCSAKDYIYQDSISL) the chain is on the extracellular side. 2 N-linked (GlcNAc...) asparagine glycosylation sites follow: Asn-24 and Asn-32. A helical membrane pass occupies residues 47-72 (PWKVLLVMLLALITLATTLSNAFVIA). At 73 to 86 (TVYRTRKLHTPANY) the chain is on the cytoplasmic side. A helical transmembrane segment spans residues 87-111 (LIASLAVTDLLVSILVMPISTMYTV). Over 112–119 (TGRWTLGQ) the chain is Extracellular. The helical transmembrane segment at 120 to 145 (VVCDFWLSSDITCCTASILHLCVIAL) threads the bilayer. Cys-122 and Cys-199 are oxidised to a cystine. Ergotamine-binding residues include Asp-129 and Thr-134. The DRY motif; important for ligand-induced conformation changes and signaling signature appears at 146 to 148 (DRY). Residues 146-165 (DRYWAITDAVEYSAKRTPKR) are Cytoplasmic-facing. The chain crosses the membrane as a helical span at residues 166–184 (AAVMIALVWVFSISISLPP). At 185 to 205 (FFWRQAKAEEEVSECVVNTDH) the chain is on the extracellular side. Residue Val-201 coordinates ergotamine. The helical transmembrane segment at 206 to 229 (ILYTVYSTVGAFYFPTLLLIALYG) threads the bilayer. Over 230–315 (RIYVEARSRI…AARERKATKT (86 aa)) the chain is Cytoplasmic. Over residues 259-272 (DSPGSTSSVTSINS) the composition is skewed to polar residues. Residues 259–281 (DSPGSTSSVTSINSRVPDVPSES) form a disordered region. A helical membrane pass occupies residues 316-337 (LGIILGAFIVCWLPFFIISLVM). Residues 338–347 (PICKDACWFH) are Extracellular-facing. Residues 348–370 (LAIFDFFTWLGYLNSLINPIIYT) form a helical membrane-spanning segment. The NPxxY motif; important for ligand-induced conformation changes and signaling motif lies at 365–369 (NPIIY). The Cytoplasmic segment spans residues 371–390 (MSNEDFKQAFHKLIRFKCTS). A lipid anchor (S-palmitoyl cysteine) is attached at Cys-388.

The protein belongs to the G-protein coupled receptor 1 family. Homodimer. Heterodimer with HTR1D. In terms of processing, phosphorylated. Desensitization of the receptor may be mediated by its phosphorylation. Palmitoylated. As to expression, detected in cerebral artery smooth muscle cells (at protein level). Detected in brain cortex, striatum, amygdala, medulla, hippocampus, caudate nucleus and putamen.

The protein localises to the cell membrane. G-protein coupled receptor for 5-hydroxytryptamine (serotonin). Also functions as a receptor for ergot alkaloid derivatives, various anxiolytic and antidepressant drugs and other psychoactive substances, such as lysergic acid diethylamide (LSD). Ligand binding causes a conformation change that triggers signaling via guanine nucleotide-binding proteins (G proteins) and modulates the activity of downstream effectors, such as adenylate cyclase. HTR1B is coupled to G(i)/G(o) G alpha proteins and mediates inhibitory neurotransmission by inhibiting adenylate cyclase activity. Arrestin family members inhibit signaling via G proteins and mediate activation of alternative signaling pathways. Regulates the release of 5-hydroxytryptamine, dopamine and acetylcholine in the brain, and thereby affects neural activity, nociceptive processing, pain perception, mood and behavior. Besides, plays a role in vasoconstriction of cerebral arteries. The protein is 5-hydroxytryptamine receptor 1B of Homo sapiens (Human).